The sequence spans 236 residues: Three prime repair exonuclease 2 (236 aa).

Mg(2+)-binding residues include D14 and E16. Residues 16–17 (EA) and Y122 contribute to the substrate site. H188 acts as the Proton donor/acceptor in catalysis. Position 193 (D193) interacts with Mg(2+). Substrate is bound at residue D193.

Belongs to the exonuclease superfamily. TREX family. As to quaternary structure, homodimer. Mg(2+) serves as cofactor.

It is found in the nucleus. The enzyme catalyses Exonucleolytic cleavage in the 3'- to 5'-direction to yield nucleoside 5'-phosphates.. In terms of biological role, exonuclease with a preference for double-stranded DNA with mismatched 3' termini. May play a role in DNA repair. The protein is Three prime repair exonuclease 2 (Trex2) of Mus musculus (Mouse).